The chain runs to 221 residues: PKHD-type hydroxylase P9215_13741 (221 aa).

The Fe2OG dioxygenase domain occupies Arg-80–Ser-174. Residues His-98, Asp-100, and His-155 each contribute to the Fe cation site. Arg-165 is a binding site for 2-oxoglutarate.

Requires Fe(2+) as cofactor. It depends on L-ascorbate as a cofactor.

The chain is PKHD-type hydroxylase P9215_13741 from Prochlorococcus marinus (strain MIT 9215).